We begin with the raw amino-acid sequence, 430 residues long: Histidinol dehydrogenase (430 aa).

Positions 130, 191, and 214 each coordinate NAD(+). Positions 237, 259, and 262 each coordinate substrate. 2 residues coordinate Zn(2+): Gln259 and His262. Catalysis depends on proton acceptor residues Glu327 and His328. Substrate-binding residues include His328, Asp361, Glu415, and His420. Asp361 contacts Zn(2+). His420 contacts Zn(2+).

It belongs to the histidinol dehydrogenase family. Zn(2+) serves as cofactor.

It catalyses the reaction L-histidinol + 2 NAD(+) + H2O = L-histidine + 2 NADH + 3 H(+). Its pathway is amino-acid biosynthesis; L-histidine biosynthesis; L-histidine from 5-phospho-alpha-D-ribose 1-diphosphate: step 9/9. Its function is as follows. Catalyzes the sequential NAD-dependent oxidations of L-histidinol to L-histidinaldehyde and then to L-histidine. This is Histidinol dehydrogenase from Brucella suis biovar 1 (strain 1330).